The following is a 137-amino-acid chain: Large ribosomal subunit protein uL16 (137 aa).

Belongs to the universal ribosomal protein uL16 family. As to quaternary structure, part of the 50S ribosomal subunit.

Its function is as follows. Binds 23S rRNA and is also seen to make contacts with the A and possibly P site tRNAs. This chain is Large ribosomal subunit protein uL16, found in Roseobacter denitrificans (strain ATCC 33942 / OCh 114) (Erythrobacter sp. (strain OCh 114)).